The following is a 611-amino-acid chain: uncharacterized protein (611 aa).

Positions 51–351 (LYGFIRLKIY…DYHKQGSRNL (301 aa)) constitute an SAC domain.

To yeast RSD1 and S.pombe SpBC19F5.03.

This is an uncharacterized protein from Schizosaccharomyces pombe (strain 972 / ATCC 24843) (Fission yeast).